The chain runs to 337 residues: Glutaminase-asparaginase (337 aa).

The 328-residue stretch at 10-337 (ANVVILATGG…KELQRIFWEY (328 aa)) folds into the Asparaginase/glutaminase domain. The active-site Acyl-ester intermediate is the Thr20. Residues Ser67 and 100–101 (TD) contribute to the substrate site.

This sequence belongs to the asparaginase 1 family. In terms of assembly, homotetramer.

Its subcellular location is the periplasm. It carries out the reaction L-glutamine + H2O = L-glutamate + NH4(+). It catalyses the reaction L-asparagine + H2O = L-aspartate + NH4(+). The chain is Glutaminase-asparaginase (ansB) from Pseudomonas sp. (strain ATCC 29598 / 7A).